The sequence spans 35 residues: Cytochrome b6-f complex subunit 5 (35 aa).

A helical membrane pass occupies residues 5–25 (LLCGIVLGLIPVTLTGLFVAA).

It belongs to the PetG family. As to quaternary structure, the 4 large subunits of the cytochrome b6-f complex are cytochrome b6, subunit IV (17 kDa polypeptide, PetD), cytochrome f and the Rieske protein, while the 4 small subunits are PetG, PetL, PetM and PetN. The complex functions as a dimer.

It localises to the plastid. The protein resides in the organellar chromatophore thylakoid membrane. Component of the cytochrome b6-f complex, which mediates electron transfer between photosystem II (PSII) and photosystem I (PSI), cyclic electron flow around PSI, and state transitions. PetG is required for either the stability or assembly of the cytochrome b6-f complex. The polypeptide is Cytochrome b6-f complex subunit 5 (Paulinella chromatophora).